Reading from the N-terminus, the 865-residue chain is Protein translocase subunit SecA (865 aa).

ATP-binding positions include Gln-93, Gly-111–Thr-115, and Asp-501. Residues Cys-841, Cys-843, Cys-852, and Cys-853 each coordinate Zn(2+).

This sequence belongs to the SecA family. As to quaternary structure, monomer and homodimer. Part of the essential Sec protein translocation apparatus which comprises SecA, SecYEG and auxiliary proteins SecDF-YajC and YidC. Requires Zn(2+) as cofactor.

It is found in the cell inner membrane. The protein localises to the cytoplasm. The catalysed reaction is ATP + H2O + cellular proteinSide 1 = ADP + phosphate + cellular proteinSide 2.. In terms of biological role, part of the Sec protein translocase complex. Interacts with the SecYEG preprotein conducting channel. Has a central role in coupling the hydrolysis of ATP to the transfer of proteins into and across the cell membrane, serving as an ATP-driven molecular motor driving the stepwise translocation of polypeptide chains across the membrane. In Helicobacter pylori (strain G27), this protein is Protein translocase subunit SecA.